A 163-amino-acid polypeptide reads, in one-letter code: ATP synthase subunit b 2 (163 aa).

The helical transmembrane segment at 5-25 (SLATLWATIALIIFLGVAIYI) threads the bilayer.

This sequence belongs to the ATPase B chain family. In terms of assembly, F-type ATPases have 2 components, F(1) - the catalytic core - and F(0) - the membrane proton channel. F(1) has five subunits: alpha(3), beta(3), gamma(1), delta(1), epsilon(1). F(0) has three main subunits: a(1), b(2) and c(10-14). The alpha and beta chains form an alternating ring which encloses part of the gamma chain. F(1) is attached to F(0) by a central stalk formed by the gamma and epsilon chains, while a peripheral stalk is formed by the delta and b chains.

It localises to the cell inner membrane. In terms of biological role, f(1)F(0) ATP synthase produces ATP from ADP in the presence of a proton or sodium gradient. F-type ATPases consist of two structural domains, F(1) containing the extramembraneous catalytic core and F(0) containing the membrane proton channel, linked together by a central stalk and a peripheral stalk. During catalysis, ATP synthesis in the catalytic domain of F(1) is coupled via a rotary mechanism of the central stalk subunits to proton translocation. Component of the F(0) channel, it forms part of the peripheral stalk, linking F(1) to F(0). This is ATP synthase subunit b 2 from Mesorhizobium japonicum (strain LMG 29417 / CECT 9101 / MAFF 303099) (Mesorhizobium loti (strain MAFF 303099)).